A 109-amino-acid polypeptide reads, in one-letter code: Glutaredoxin-C13 (109 aa).

Residues 2 to 108 (AEMVARLASE…PMLKNAGALW (107 aa)) form the Glutaredoxin domain. The cysteines at positions 22 and 25 are disulfide-linked. The short motif at 106 to 109 (ALWL) is the Responsive for interaction with TGA factors element.

Belongs to the glutaredoxin family. CC-type subfamily.

The protein localises to the cytoplasm. The protein resides in the nucleus. Its function is as follows. Has a glutathione-disulfide oxidoreductase activity in the presence of NADPH and glutathione reductase. Reduces low molecular weight disulfides and proteins. This is Glutaredoxin-C13 (GRXC13) from Oryza sativa subsp. japonica (Rice).